The following is a 1431-amino-acid chain: Gag-Pol polyprotein (1431 aa).

A lipid anchor (N-myristoyl glycine; by host) is attached at Gly2. The interval Ile7–Met31 is interaction with Gp41. Residues Leu8–Arg43 form an interaction with host CALM1 region. Residues Lys12–Ile19 form an interaction with host AP3D1 region. Residues Asp14–His33 form an interaction with membrane phosphatidylinositol 4,5-bisphosphate and RNA region. The Nuclear export signal signature appears at Trp16–Lys22. The short motif at Lys26 to Lys32 is the Nuclear localization signal element. Residues Lys73–Ser77 are interaction with membrane phosphatidylinositol 4,5-bisphosphate. A disordered region spans residues Glu106 to Val126. Position 130 is a phosphotyrosine; by host (Tyr130). Positions Asn187–Gln225 are interaction with human PPIA/CYPA and NUP153. Positions Tyr275 to Leu361 are dimerization/Multimerization of capsid protein p24. CCHC-type zinc fingers lie at residues Ile387–Ala404 and Lys408–Glu425. The segment at Phe437 to Gln461 is disordered. The interval Pro485–Leu489 is dimerization of protease. Positions Lys504–Met573 constitute a Peptidase A2 domain. Asp509 acts as the For protease activity; shared with dimeric partner in catalysis. Dimerization of protease stretches follow at residues Gly533–Lys539 and Asn572–Pro584. The Reverse transcriptase domain maps to Glu627–Leu817. Asp693, Asp768, and Asp769 together coordinate Mg(2+). Positions Phe810 to His818 are RT 'primer grip'. The Tryptophan repeat motif motif lies at Trp981–Trp997. One can recognise an RNase H type-1 domain in the interval Ile1017 to Arg1140. Mg(2+)-binding residues include Asp1026, Glu1061, Asp1081, and Asp1132. An Integrase-type zinc finger spans residues Asp1146–Gln1187. Zn(2+)-binding residues include His1155, His1159, Cys1183, and Cys1186. An Integrase catalytic domain is found at Val1197 to Ile1347. Residues Asp1207, Asp1259, and Glu1295 each contribute to the Mg(2+) site. The segment at residues Phe1366 to Asp1413 is a DNA-binding region (integrase-type).

As to quaternary structure, homotrimer; further assembles as hexamers of trimers. Interacts with gp41 (via C-terminus). Interacts with host CALM1; this interaction induces a conformational change in the Matrix protein, triggering exposure of the myristate group. Interacts with host AP3D1; this interaction allows the polyprotein trafficking to multivesicular bodies during virus assembly. Part of the pre-integration complex (PIC) which is composed of viral genome, matrix protein, Vpr and integrase. Homodimer; the homodimer further multimerizes as homohexamers or homopentamers. Interacts with human PPIA/CYPA; This interaction stabilizes the capsid. Interacts with human NUP153. Interacts with host PDZD8; this interaction stabilizes the capsid. Interacts with monkey TRIM5; this interaction destabilizes the capsid. In terms of assembly, homodimer, whose active site consists of two apposed aspartic acid residues. As to quaternary structure, heterodimer of p66 RT and p51 RT (RT p66/p51). Heterodimerization of RT is essential for DNA polymerase activity. The overall folding of the subdomains is similar in p66 RT and p51 RT but the spatial arrangements of the subdomains are dramatically different. Homotetramer; may further associate as a homohexadecamer. Part of the pre-integration complex (PIC) which is composed of viral genome, matrix protein, Vpr and integrase. Interacts with human SMARCB1/INI1 and human PSIP1/LEDGF isoform 1. Interacts with human KPNA3; this interaction might play a role in nuclear import of the pre-integration complex. Interacts with human NUP153; this interaction might play a role in nuclear import of the pre-integration complex. The cofactor is Mg(2+). Specific enzymatic cleavages by the viral protease yield mature proteins. The protease is released by autocatalytic cleavage. The polyprotein is cleaved during and after budding, this process is termed maturation. Proteolytic cleavage of p66 RT removes the RNase H domain to yield the p51 RT subunit. Nucleocapsid protein p7 might be further cleaved after virus entry. Post-translationally, tyrosine phosphorylated presumably in the virion by a host kinase. Phosphorylation is apparently not a major regulator of membrane association. In terms of processing, phosphorylated possibly by host MAPK1; this phosphorylation is necessary for Pin1-mediated virion uncoating. Methylated by host PRMT6, impairing its function by reducing RNA annealing and the initiation of reverse transcription.

Its subcellular location is the host cell membrane. It is found in the host endosome. The protein localises to the host multivesicular body. It localises to the virion membrane. The protein resides in the host nucleus. Its subcellular location is the host cytoplasm. It is found in the virion. It carries out the reaction Specific for a P1 residue that is hydrophobic, and P1' variable, but often Pro.. The enzyme catalyses Endohydrolysis of RNA in RNA/DNA hybrids. Three different cleavage modes: 1. sequence-specific internal cleavage of RNA. Human immunodeficiency virus type 1 and Moloney murine leukemia virus enzymes prefer to cleave the RNA strand one nucleotide away from the RNA-DNA junction. 2. RNA 5'-end directed cleavage 13-19 nucleotides from the RNA end. 3. DNA 3'-end directed cleavage 15-20 nucleotides away from the primer terminus.. It catalyses the reaction 3'-end directed exonucleolytic cleavage of viral RNA-DNA hybrid.. The catalysed reaction is DNA(n) + a 2'-deoxyribonucleoside 5'-triphosphate = DNA(n+1) + diphosphate. With respect to regulation, protease: The viral protease is inhibited by many synthetic protease inhibitors (PIs), such as amprenavir, atazanavir, indinavir, loprinavir, nelfinavir, ritonavir and saquinavir. Use of protease inhibitors in tritherapy regimens permit more ambitious therapeutic strategies. Reverse transcriptase/ribonuclease H: RT can be inhibited either by nucleoside RT inhibitors (NRTIs) or by non nucleoside RT inhibitors (NNRTIs). NRTIs act as chain terminators, whereas NNRTIs inhibit DNA polymerization by binding a small hydrophobic pocket near the RT active site and inducing an allosteric change in this region. Classical NRTIs are abacavir, adefovir (PMEA), didanosine (ddI), lamivudine (3TC), stavudine (d4T), tenofovir (PMPA), zalcitabine (ddC), and zidovudine (AZT). Classical NNRTIs are atevirdine (BHAP U-87201E), delavirdine, efavirenz (DMP-266), emivirine (I-EBU), and nevirapine (BI-RG-587). The tritherapies used as a basic effective treatment of AIDS associate two NRTIs and one NNRTI. Functionally, mediates, with Gag polyprotein, the essential events in virion assembly, including binding the plasma membrane, making the protein-protein interactions necessary to create spherical particles, recruiting the viral Env proteins, and packaging the genomic RNA via direct interactions with the RNA packaging sequence (Psi). Gag-Pol polyprotein may regulate its own translation, by the binding genomic RNA in the 5'-UTR. At low concentration, the polyprotein would promote translation, whereas at high concentration, the polyprotein would encapsidate genomic RNA and then shut off translation. Targets the polyprotein to the plasma membrane via a multipartite membrane-binding signal, that includes its myristoylated N-terminus. Matrix protein is part of the pre-integration complex. Implicated in the release from host cell mediated by Vpu. Binds to RNA. In terms of biological role, forms the conical core that encapsulates the genomic RNA-nucleocapsid complex in the virion. Most core are conical, with only 7% tubular. The core is constituted by capsid protein hexamer subunits. The core is disassembled soon after virion entry. Host restriction factors such as TRIM5-alpha or TRIMCyp bind retroviral capsids and cause premature capsid disassembly, leading to blocks in reverse transcription. Capsid restriction by TRIM5 is one of the factors which restricts HIV-1 to the human species. Host PIN1 apparently facilitates the virion uncoating. On the other hand, interactions with PDZD8 or CYPA stabilize the capsid. Its function is as follows. Encapsulates and protects viral dimeric unspliced genomic RNA (gRNA). Binds these RNAs through its zinc fingers. Acts as a nucleic acid chaperone which is involved in rearangement of nucleic acid secondary structure during gRNA retrotranscription. Also facilitates template switch leading to recombination. As part of the polyprotein, participates in gRNA dimerization, packaging, tRNA incorporation and virion assembly. Functionally, aspartyl protease that mediates proteolytic cleavages of Gag and Gag-Pol polyproteins during or shortly after the release of the virion from the plasma membrane. Cleavages take place as an ordered, step-wise cascade to yield mature proteins. This process is called maturation. Displays maximal activity during the budding process just prior to particle release from the cell. Also cleaves Nef and Vif, probably concomitantly with viral structural proteins on maturation of virus particles. Hydrolyzes host EIF4GI and PABP1 in order to shut off the capped cellular mRNA translation. The resulting inhibition of cellular protein synthesis serves to ensure maximal viral gene expression and to evade host immune response. Also mediates cleavage of host YTHDF3. Mediates cleavage of host CARD8, thereby activating the CARD8 inflammasome, leading to the clearance of latent HIV-1 in patient CD4(+) T-cells after viral reactivation; in contrast, HIV-1 can evade CARD8-sensing when its protease remains inactive in infected cells prior to viral budding. Multifunctional enzyme that converts the viral RNA genome into dsDNA in the cytoplasm, shortly after virus entry into the cell. This enzyme displays a DNA polymerase activity that can copy either DNA or RNA templates, and a ribonuclease H (RNase H) activity that cleaves the RNA strand of RNA-DNA heteroduplexes in a partially processive 3' to 5' endonucleasic mode. Conversion of viral genomic RNA into dsDNA requires many steps. A tRNA(3)-Lys binds to the primer-binding site (PBS) situated at the 5'-end of the viral RNA. RT uses the 3' end of the tRNA primer to perform a short round of RNA-dependent minus-strand DNA synthesis. The reading proceeds through the U5 region and ends after the repeated (R) region which is present at both ends of viral RNA. The portion of the RNA-DNA heteroduplex is digested by the RNase H, resulting in a ssDNA product attached to the tRNA primer. This ssDNA/tRNA hybridizes with the identical R region situated at the 3' end of viral RNA. This template exchange, known as minus-strand DNA strong stop transfer, can be either intra- or intermolecular. RT uses the 3' end of this newly synthesized short ssDNA to perform the RNA-dependent minus-strand DNA synthesis of the whole template. RNase H digests the RNA template except for two polypurine tracts (PPTs) situated at the 5'-end and near the center of the genome. It is not clear if both polymerase and RNase H activities are simultaneous. RNase H probably can proceed both in a polymerase-dependent (RNA cut into small fragments by the same RT performing DNA synthesis) and a polymerase-independent mode (cleavage of remaining RNA fragments by free RTs). Secondly, RT performs DNA-directed plus-strand DNA synthesis using the PPTs that have not been removed by RNase H as primers. PPTs and tRNA primers are then removed by RNase H. The 3' and 5' ssDNA PBS regions hybridize to form a circular dsDNA intermediate. Strand displacement synthesis by RT to the PBS and PPT ends produces a blunt ended, linear dsDNA copy of the viral genome that includes long terminal repeats (LTRs) at both ends. In terms of biological role, catalyzes viral DNA integration into the host chromosome, by performing a series of DNA cutting and joining reactions. This enzyme activity takes place after virion entry into a cell and reverse transcription of the RNA genome in dsDNA. The first step in the integration process is 3' processing. This step requires a complex comprising the viral genome, matrix protein, Vpr and integrase. This complex is called the pre-integration complex (PIC). The integrase protein removes 2 nucleotides from each 3' end of the viral DNA, leaving recessed CA OH's at the 3' ends. In the second step, the PIC enters cell nucleus. This process is mediated through integrase and Vpr proteins, and allows the virus to infect a non dividing cell. This ability to enter the nucleus is specific of lentiviruses, other retroviruses cannot and rely on cell division to access cell chromosomes. In the third step, termed strand transfer, the integrase protein joins the previously processed 3' ends to the 5' ends of strands of target cellular DNA at the site of integration. The 5'-ends are produced by integrase-catalyzed staggered cuts, 5 bp apart. A Y-shaped, gapped, recombination intermediate results, with the 5'-ends of the viral DNA strands and the 3' ends of target DNA strands remaining unjoined, flanking a gap of 5 bp. The last step is viral DNA integration into host chromosome. This involves host DNA repair synthesis in which the 5 bp gaps between the unjoined strands are filled in and then ligated. Since this process occurs at both cuts flanking the HIV genome, a 5 bp duplication of host DNA is produced at the ends of HIV-1 integration. Alternatively, Integrase may catalyze the excision of viral DNA just after strand transfer, this is termed disintegration. The polypeptide is Gag-Pol polyprotein (gag-pol) (Homo sapiens (Human)).